A 505-amino-acid chain; its full sequence is Flagellin (505 aa).

This sequence belongs to the bacterial flagellin family.

The protein resides in the secreted. The protein localises to the bacterial flagellum. In terms of biological role, flagellin is the subunit protein which polymerizes to form the filaments of bacterial flagella. This chain is Flagellin (fliC), found in Salmonella derby.